We begin with the raw amino-acid sequence, 154 residues long: MSLATLDATQHPNLPQSSQTLFSAKATKKLTFEQIAQHIGRNEVAAAAIFYGQAKASPEDIEKLSSLLDIPTPVLEEQLGGFPDRGRSVEMPPKEPLIYRLYEIVQNYGYAYKAVLNEKFGDGIMSAISFSTKVEKETDADGNNWAVITLRGKW.

Residues arginine 100, glutamate 103, and serine 126 contribute to the active site.

It belongs to the cyanase family.

It catalyses the reaction cyanate + hydrogencarbonate + 3 H(+) = NH4(+) + 2 CO2. In terms of biological role, catalyzes the reaction of cyanate with bicarbonate to produce ammonia and carbon dioxide. The protein is Cyanate hydratase of Aspergillus clavatus (strain ATCC 1007 / CBS 513.65 / DSM 816 / NCTC 3887 / NRRL 1 / QM 1276 / 107).